The sequence spans 207 residues: Large ribosomal subunit protein uL4 (207 aa).

Residues 48-85 (THKVKNRSEVRGGGRKPWRQKGTGRARQGSIRSPQWRG) form a disordered region. The segment covering 60–71 (GGRKPWRQKGTG) has biased composition (basic residues).

It belongs to the universal ribosomal protein uL4 family. In terms of assembly, part of the 50S ribosomal subunit.

In terms of biological role, one of the primary rRNA binding proteins, this protein initially binds near the 5'-end of the 23S rRNA. It is important during the early stages of 50S assembly. It makes multiple contacts with different domains of the 23S rRNA in the assembled 50S subunit and ribosome. Its function is as follows. Forms part of the polypeptide exit tunnel. The sequence is that of Large ribosomal subunit protein uL4 from Bacillus subtilis (strain 168).